Reading from the N-terminus, the 932-residue chain is Protocadherin gamma-A2 (932 aa).

The N-terminal stretch at 1–28 (MAALQKLPHCRKLVLLCFLLATLWEARA) is a signal peptide. 6 Cadherin domains span residues 29-133 (GQIR…APRF), 134-242 (GVEE…APVF), 243-347 (TQPE…APEF), 348-452 (YMTS…APAF), 453-562 (SRTS…APEI), and 570-682 (DGST…EPSA). The Extracellular portion of the chain corresponds to 29-692 (GQIRYSVREE…IPNDSDLTLY (664 aa)). N-linked (GlcNAc...) asparagine glycans are attached at residues Asn-419 and Asn-545. A glycan (N-linked (GlcNAc...) asparagine) is linked at Asn-685. Residues 693-713 (LVVAVAAVSCVFLAFVIVLLA) traverse the membrane as a helical segment. Topologically, residues 714-932 (HRLRRWHKSR…KKKSGKKEKK (219 aa)) are cytoplasmic. 2 disordered regions span residues 798–841 (LEEE…WPNN) and 902–932 (ATLTNAAGKRDGKAPAGGNGNKKKSGKKEKK). Residues 806-841 (FSQQAPPNTDWRFSQAQRPGTSGSQNGDDTGTWPNN) are compositionally biased toward polar residues. A compositionally biased stretch (basic residues) spans 922–932 (NKKKSGKKEKK).

Its subcellular location is the cell membrane. Potential calcium-dependent cell-adhesion protein. May be involved in the establishment and maintenance of specific neuronal connections in the brain. This chain is Protocadherin gamma-A2 (PCDHGA2), found in Homo sapiens (Human).